Consider the following 617-residue polypeptide: Erythritol-mannosyl-transferase 1 (617 aa).

Disordered stretches follow at residues 365-396 (RNPGSPGFTSPLNSPTAVATPKWDEKRPIDSR) and 567-617 (RQRK…VTNP). Residues 371 to 381 (GFTSPLNSPTA) show a composition bias toward polar residues. A compositionally biased stretch (basic and acidic residues) spans 386–396 (KWDEKRPIDSR). A compositionally biased stretch (polar residues) spans 578 to 603 (TAKTSLSVDTTEVATPTFTDTETSLS).

The protein belongs to the UDP-glycosyltransferase family.

The protein operates within secondary metabolite biosynthesis. Glycosyltransferase; part of the gene cluster that mediates the biosynthesis of mannosylerythritol lipids (MELs), surface-active substances that enhance the availability of water-insoluble substrates. Depending on the number of acetyl groups, mannosylerythritol lipids can be differentiated into MEL A (fully acetylated), MEL B and MEL C (monoacetylated at R-6 and R-4, respectively), and the fully deacetylated MEL D. The first step in the pathway is the generation of mannosylerythritol by the glycosyltransferase EMT1 which catalyzes the transfer of GDP-mannose to the C-4 atom of meso-erythritol. This reaction has to be stereospecific, since only mannosyl-D-erythritol is generated. The produced disaccharide is subsequently acylated with fatty acids of various lengths by the acyltransferases MAC1 and MAC2 at positions C-2 and C-3, repectively. The existence of MEL derivatives which carry an acetyl group at C-2 implies that at least MAC1 also accepts acetyl-CoA as a donor. The final step of MEL biosynthesis is the acetylation of the fully acylated mannosylerythritol lipids catalyzed by the acetyl-CoA-dependent acetyltransferase MAT1. MAT1 displays a relaxed regioselectivity and is able to transfer acetylgroups to both positions C-4 and C-6 of the mannosyl moiety. The sequence is that of Erythritol-mannosyl-transferase 1 from Pseudozyma antarctica (strain T-34) (Yeast).